The sequence spans 261 residues: Tryptophan synthase alpha chain (261 aa).

Catalysis depends on proton acceptor residues Glu-49 and Asp-60.

This sequence belongs to the TrpA family. As to quaternary structure, tetramer of two alpha and two beta chains.

It carries out the reaction (1S,2R)-1-C-(indol-3-yl)glycerol 3-phosphate + L-serine = D-glyceraldehyde 3-phosphate + L-tryptophan + H2O. Its pathway is amino-acid biosynthesis; L-tryptophan biosynthesis; L-tryptophan from chorismate: step 5/5. In terms of biological role, the alpha subunit is responsible for the aldol cleavage of indoleglycerol phosphate to indole and glyceraldehyde 3-phosphate. This chain is Tryptophan synthase alpha chain, found in Roseiflexus sp. (strain RS-1).